Here is a 248-residue protein sequence, read N- to C-terminus: Exosome complex component Rrp41 (248 aa).

Belongs to the RNase PH family. Rrp41 subfamily. In terms of assembly, component of the archaeal exosome complex. Forms a hexameric ring-like arrangement composed of 3 Rrp41-Rrp42 heterodimers. The hexameric ring associates with a trimer of Rrp4 and/or Csl4 subunits.

Its subcellular location is the cytoplasm. Its function is as follows. Catalytic component of the exosome, which is a complex involved in RNA degradation. Has 3'-&gt;5' exoribonuclease activity. Can also synthesize heteromeric RNA-tails. This chain is Exosome complex component Rrp41, found in Thermoplasma acidophilum (strain ATCC 25905 / DSM 1728 / JCM 9062 / NBRC 15155 / AMRC-C165).